The chain runs to 319 residues: Acetyl-coenzyme A carboxylase carboxyl transferase subunit alpha (319 aa).

The CoA carboxyltransferase C-terminal domain occupies 35–296 (DLDKEIEQLE…KANLLRQLED (262 aa)).

Belongs to the AccA family. In terms of assembly, acetyl-CoA carboxylase is a heterohexamer composed of biotin carboxyl carrier protein (AccB), biotin carboxylase (AccC) and two subunits each of ACCase subunit alpha (AccA) and ACCase subunit beta (AccD).

The protein localises to the cytoplasm. The enzyme catalyses N(6)-carboxybiotinyl-L-lysyl-[protein] + acetyl-CoA = N(6)-biotinyl-L-lysyl-[protein] + malonyl-CoA. The protein operates within lipid metabolism; malonyl-CoA biosynthesis; malonyl-CoA from acetyl-CoA: step 1/1. Its function is as follows. Component of the acetyl coenzyme A carboxylase (ACC) complex. First, biotin carboxylase catalyzes the carboxylation of biotin on its carrier protein (BCCP) and then the CO(2) group is transferred by the carboxyltransferase to acetyl-CoA to form malonyl-CoA. The polypeptide is Acetyl-coenzyme A carboxylase carboxyl transferase subunit alpha (Vibrio campbellii (strain ATCC BAA-1116)).